Here is a 348-residue protein sequence, read N- to C-terminus: Selenide, water dikinase (348 aa).

Cysteine 17 is an active-site residue. ATP contacts are provided by residues lysine 20 and arginine 47–aspartate 49. Residue aspartate 50 coordinates Mg(2+). ATP is bound by residues aspartate 67, aspartate 90, and glycine 138 to threonine 140. Aspartate 90 lines the Mg(2+) pocket. Aspartate 226 provides a ligand contact to Mg(2+).

Belongs to the selenophosphate synthase 1 family. Class I subfamily. In terms of assembly, homodimer. Mg(2+) serves as cofactor.

It catalyses the reaction hydrogenselenide + ATP + H2O = selenophosphate + AMP + phosphate + 2 H(+). Synthesizes selenophosphate from selenide and ATP. This Pelobacter propionicus (strain DSM 2379 / NBRC 103807 / OttBd1) protein is Selenide, water dikinase.